An 880-amino-acid polypeptide reads, in one-letter code: MSTVEPNVYDPQQVETSAQQFWDATRAFQVDENSEKPKFYCLSMLPYPSGALHMGHVRNYTISDVVSRYKRMTGHNVLQPMGWDAFGLPAENAAIKNKTAPAKWTYANIEHMRAQLKSLGYAIDWSREFATCTPDYYVHEQRMFTRLMRKGLAYRRNAVVNWDPIDQTVLANEQVIDGRGWRSGAVVEKREIPQWFLRITDYAQELLDGLDQLDGWPDSVKTMQRNWIGRSEGLEIQFDVRDPDGATLDPLRVFTTRPDTLMGVTFVSIAAEHPLALHAAKSNPELAALLETLKHGGVSEAELETQEKRGMATGLTAVHPISGEQVPVWVANFVLMGYGTGAVMAVPGHDQRDFEFANKYGLPIVQVVKLREPRNEEEQTWDATHWRDWYTDKSRELELINSAEFDGLDFGGAFEALAERFERKGQGQRRVNYRLRDWGVSRQRYWGCPIPVIYCAKCGAVPVPEDQLPVVLPENVEFSGTGSPIKTDPTWRQTTCPDCGGPAERETDTFDTFMESSWYVARYTSPKARDMVDRRANYWMPADLYVGGIEHAILHLMYFRFYHKLMRDARLVDSDEPVTNLLTQGMVIADTFYRDADNGGKDWINPADVEIQRDERGRVTGAVLIADGQPVQIGGTEKMSKSKNNGVDPQSMVAKYGADTVRLFSMFAAPPEQSLEWNEAGVDGMARFMRRLWAQVHKHVGEGTAVALDVAALSAEQKAIRRKTHETIGKVGDDYGRRHSFNTAIAAVMELSNALAKFDDASEQGRAVRQEALEAMVLLLNPITPHASHALWQVLGRGETLLENVAFPQADASALVRDALTLAVQINGKLRGTIDVAADATREQIEALAQAEPNAAKFLEGLSVRKIIIVPGKIVNIVAG.

The 'HIGH' region signature appears at 46-56 (PYPSGALHMGH). Residues 638 to 642 (KMSKS) carry the 'KMSKS' region motif. Position 641 (lysine 641) interacts with ATP.

Belongs to the class-I aminoacyl-tRNA synthetase family.

The protein resides in the cytoplasm. It catalyses the reaction tRNA(Leu) + L-leucine + ATP = L-leucyl-tRNA(Leu) + AMP + diphosphate. The chain is Leucine--tRNA ligase from Xanthomonas axonopodis pv. citri (strain 306).